The sequence spans 89 residues: UPF0147 protein TV0625 (89 aa).

The protein belongs to the UPF0147 family.

This Thermoplasma volcanium (strain ATCC 51530 / DSM 4299 / JCM 9571 / NBRC 15438 / GSS1) protein is UPF0147 protein TV0625.